We begin with the raw amino-acid sequence, 94 residues long: MLKPLGDRVIIEVTEAAEQTVGGIVLANNAKDKPVTGKVVAVGSGYVLNDGSKQDLTVKSGDQVLFDKYAGQEVSFEGADYLALHEKDIVAIVE.

It belongs to the GroES chaperonin family. Heptamer of 7 subunits arranged in a ring. Interacts with the chaperonin GroEL.

It is found in the cytoplasm. Together with the chaperonin GroEL, plays an essential role in assisting protein folding. The GroEL-GroES system forms a nano-cage that allows encapsulation of the non-native substrate proteins and provides a physical environment optimized to promote and accelerate protein folding. GroES binds to the apical surface of the GroEL ring, thereby capping the opening of the GroEL channel. The protein is Co-chaperonin GroES of Leuconostoc citreum (strain KM20).